Reading from the N-terminus, the 287-residue chain is MPSNNFKFFLTWWLTQQVTGLAVPFMLDMAPNAFDDQYEGCVEDMEKKAPQLLQEDFNMNEELKLEWEKAEIKWKEIKNCMSYPAGFHDFHGTALVAYTGNIHRSLNEATREFKINPGNFHYKAFHYYLTRALQLLSDQGCRSVYRGTNVRFRYTGKGSVRFGHFASSSLNRSVATSSPFFNGQGTLFIIKTCLGAHIKHCSYYTHEEEVLIPGYEVFHKVKTQSVERYIQISLDSPKRKKSNFNCFYSGSTQAANVSSLGSRESCVSLFLVVLLGLLVQQLTLAEP.

An N-terminal signal peptide occupies residues 1 to 20 (MPSNNFKFFLTWWLTQQVTG). Intrachain disulfides connect C41–C246, C80–C201, and C141–C193. Residues 61–241 (EELKLEWEKA…ISLDSPKRKK (181 aa)) enclose the TR mART core domain. 2 residues coordinate NAD(+): Y98 and R146. Active-site residues include R146 and S167. N171 carries an N-linked (GlcNAc...) asparagine glycan. An NAD(+)-binding site is contributed by S202. E209 is an active-site residue. An N-linked (GlcNAc...) asparagine glycan is attached at N256. S258 carries the GPI-anchor amidated serine lipid modification. Positions 259 to 287 (SLGSRESCVSLFLVVLLGLLVQQLTLAEP) are cleaved as a propeptide — removed in mature form.

The protein belongs to the Arg-specific ADP-ribosyltransferase family. It is proposed that in the absence of reducing agents, a disulfide bond is formed between Cys-80 and Cys-201, leading to a conformational change that reduces the catalytic rate of NAD glycohydrolysis. Expressed in spleen, intestine and thymus.

Its subcellular location is the cell membrane. The enzyme catalyses L-arginyl-[protein] + NAD(+) = N(omega)-(ADP-D-ribosyl)-L-arginyl-[protein] + nicotinamide + H(+). It catalyses the reaction NAD(+) + H2O = ADP-D-ribose + nicotinamide + H(+). Has both ADP-ribosyltransferase activity and thiol-dependent NAD(+) glycohydrolase activity. This Mus musculus (Mouse) protein is T-cell ecto-ADP-ribosyltransferase 1 (Art2a).